The chain runs to 324 residues: ATP-dependent 6-phosphofructokinase (324 aa).

An ATP-binding site is contributed by Gly-15. 25–29 (RGVVR) serves as a coordination point for ADP. ATP contacts are provided by residues 76–77 (RF) and 106–109 (GDGS). Residue Asp-107 participates in Mg(2+) binding. 130–132 (TID) contributes to the substrate binding site. The active-site Proton acceptor is the Asp-132. Arg-159 provides a ligand contact to ADP. Substrate is bound by residues Arg-167 and 174–176 (MGR). Residues 190-192 (GCE), Lys-216, and 218-220 (KRH) contribute to the ADP site. Residues Glu-227, Arg-248, and 254–257 (HIQR) each bind substrate.

Belongs to the phosphofructokinase type A (PFKA) family. ATP-dependent PFK group I subfamily. Prokaryotic clade 'B1' sub-subfamily. In terms of assembly, homotetramer. The cofactor is Mg(2+).

It is found in the cytoplasm. It carries out the reaction beta-D-fructose 6-phosphate + ATP = beta-D-fructose 1,6-bisphosphate + ADP + H(+). The protein operates within carbohydrate degradation; glycolysis; D-glyceraldehyde 3-phosphate and glycerone phosphate from D-glucose: step 3/4. With respect to regulation, allosterically activated by ADP and other diphosphonucleosides, and allosterically inhibited by phosphoenolpyruvate. Its function is as follows. Catalyzes the phosphorylation of D-fructose 6-phosphate to fructose 1,6-bisphosphate by ATP, the first committing step of glycolysis. The sequence is that of ATP-dependent 6-phosphofructokinase from Haemophilus ducreyi (strain 35000HP / ATCC 700724).